The primary structure comprises 228 residues: Lipoprotein-releasing system ATP-binding protein LolD (228 aa).

Positions 8 to 228 constitute an ABC transporter domain; it reads LQAKKLVKAY…ELHDGLLRRL (221 aa). Position 44–51 (44–51) interacts with ATP; sequence GASGSGKS.

It belongs to the ABC transporter superfamily. Lipoprotein translocase (TC 3.A.1.125) family. The complex is composed of two ATP-binding proteins (LolD) and two transmembrane proteins (LolC and LolE).

It localises to the cell inner membrane. Part of the ABC transporter complex LolCDE involved in the translocation of mature outer membrane-directed lipoproteins, from the inner membrane to the periplasmic chaperone, LolA. Responsible for the formation of the LolA-lipoprotein complex in an ATP-dependent manner. The sequence is that of Lipoprotein-releasing system ATP-binding protein LolD from Alcanivorax borkumensis (strain ATCC 700651 / DSM 11573 / NCIMB 13689 / SK2).